Reading from the N-terminus, the 247-residue chain is Geranylgeranylglyceryl phosphate synthase (247 aa).

Residues Asp23 and Ser52 each coordinate Mg(2+). Sn-glycerol 1-phosphate contacts are provided by residues 171–177 (YLEAGSG), 203–204 (GG), and 225–226 (GT).

This sequence belongs to the GGGP/HepGP synthase family. Group II subfamily. Requires Mg(2+) as cofactor.

It localises to the cytoplasm. It carries out the reaction sn-glycerol 1-phosphate + (2E,6E,10E)-geranylgeranyl diphosphate = sn-3-O-(geranylgeranyl)glycerol 1-phosphate + diphosphate. It participates in membrane lipid metabolism; glycerophospholipid metabolism. Functionally, prenyltransferase that catalyzes the transfer of the geranylgeranyl moiety of geranylgeranyl diphosphate (GGPP) to the C3 hydroxyl of sn-glycerol-1-phosphate (G1P). This reaction is the first ether-bond-formation step in the biosynthesis of archaeal membrane lipids. The sequence is that of Geranylgeranylglyceryl phosphate synthase from Methanosarcina barkeri (strain Fusaro / DSM 804).